The primary structure comprises 81 residues: Adenoregulin-related peptide (81 aa).

Positions 1-22 (MAFLKKSLLLVLFLGLVSLSIC) are cleaved as a signal peptide. The propeptide occupies 23-43 (EEEKRENEDEEEQEDDEQSEM). Residues 24-46 (EEKRENEDEEEQEDDEQSEMKRG) form a disordered region. Positions 30 to 40 (EDEEEQEDDEQ) are enriched in acidic residues. Isoleucine amide is present on isoleucine 78. A propeptide spanning residues 79-81 (GEQ) is cleaved from the precursor.

As to expression, expressed by the skin glands.

The protein resides in the secreted. Has antibacterial activity against Gram-positive bacterium M.luteus NCT C2665 and against Gram-negative bacterium E.coli K12D31. This chain is Adenoregulin-related peptide, found in Agalychnis callidryas (Red-eyed tree frog).